Reading from the N-terminus, the 466-residue chain is Tubulointerstitial nephritis antigen-like (466 aa).

Positions 1–21 (MWGCWLGLLLLLLAGQAALEA) are cleaved as a signal peptide. Residues 49–96 (EQDMCCRGRADECALPYLGATCYCDLFCNRTVSDCCPDFWDFCLGIPP) form the SMB domain. Intrachain disulfides connect cysteine 53-cysteine 72, cysteine 70-cysteine 72, cysteine 70-cysteine 84, cysteine 76-cysteine 83, and cysteine 84-cysteine 91. Asparagine 77 carries an N-linked (GlcNAc...) asparagine glycan. Asparagine 160 carries an N-linked (GlcNAc...) asparagine glycan.

Belongs to the peptidase C1 family. Post-translationally, glycosylated. As to expression, highly expressed in kidney, heart and adrenocortical cells of adrenal glands. Moderately expressed in spleen and liver. Also found in prostate, seminal vesicle, epididymis and testis in male reproductive organs. In adrenal glands is found in the outer cortical regions corresponding to the zona glomerulosa (zG) and the undifferentiated cell zone (zU) (at protein level).

It is found in the secreted. In terms of biological role, may be implicated in the adrenocortical zonation and in mechanisms for repressing the CYP11B1 gene expression in adrenocortical cells. This is a non catalytic peptidase C1 family protein. This Mus musculus (Mouse) protein is Tubulointerstitial nephritis antigen-like (Tinagl1).